The primary structure comprises 225 residues: PKHD-type hydroxylase HEAR3399 (225 aa).

The Fe2OG dioxygenase domain occupies 77 to 177; the sequence is RYMPPLFNRY…RVCSFFWLQS (101 aa). Fe cation is bound by residues His95, Asp97, and His158. Arg168 contributes to the 2-oxoglutarate binding site.

Requires Fe(2+) as cofactor. It depends on L-ascorbate as a cofactor.

The protein is PKHD-type hydroxylase HEAR3399 of Herminiimonas arsenicoxydans.